Consider the following 545-residue polypeptide: External NADH-ubiquinone oxidoreductase 2, mitochondrial (545 aa).

Residues 1 to 21 (MLPRLGFARTARSIHRFKMTQ) constitute a mitochondrion transit peptide. FAD is bound at residue 99–129 (ELVILGTGWGAISLLKKLDTSLYNVTVVSPR). Residue 260 to 296 (LTFVVVGGGPTGVEFAAELQDYINQDLRKWMPDLSKE) participates in NAD(+) binding.

Belongs to the NADH dehydrogenase family.

Its subcellular location is the mitochondrion intermembrane space. It catalyses the reaction a quinone + NADH + H(+) = a quinol + NAD(+). The catalysed reaction is a ubiquinone + NADH + H(+) = a ubiquinol + NAD(+). External NADH dehydrogenase required for optimum cellular growth with a number of nonfermentable carbon sources, including ethanol. With NDE1, performes the mitochondrial oxidation of cytosolic NADH under these growth conditions. Regulates the mitochondrial glycerol-3-phosphate dehydrogenase, GUT2, also involved in cytosolic NADH oxidation. In Saccharomyces cerevisiae (strain ATCC 204508 / S288c) (Baker's yeast), this protein is External NADH-ubiquinone oxidoreductase 2, mitochondrial (NDE2).